Reading from the N-terminus, the 213-residue chain is Na(+)-translocating NADH-quinone reductase subunit D (213 aa).

7 helical membrane-spanning segments follow: residues 21-41, 42-62, 77-97, 101-121, 131-151, 153-173, and 183-203; these read ILIA…VQTA, ITMG…VSLL, IIIS…FFDI, LSVF…SESL, FLDG…IGVI, ELFG…VYAS, and LSLM…IWLV.

This sequence belongs to the NqrDE/RnfAE family. Composed of six subunits; NqrA, NqrB, NqrC, NqrD, NqrE and NqrF.

It localises to the cell inner membrane. The catalysed reaction is a ubiquinone + n Na(+)(in) + NADH + H(+) = a ubiquinol + n Na(+)(out) + NAD(+). Functionally, NQR complex catalyzes the reduction of ubiquinone-1 to ubiquinol by two successive reactions, coupled with the transport of Na(+) ions from the cytoplasm to the periplasm. NqrA to NqrE are probably involved in the second step, the conversion of ubisemiquinone to ubiquinol. The protein is Na(+)-translocating NADH-quinone reductase subunit D of Chlamydia pneumoniae (Chlamydophila pneumoniae).